The primary structure comprises 533 residues: 2-isopropylmalate synthase (533 aa).

The region spanning 8 to 269 is the Pyruvate carboxyltransferase domain; the sequence is ILIFDTTLRD…YFNPFLGRPA (262 aa). Asp-17, His-208, His-210, and Asn-244 together coordinate Mn(2+). A regulatory domain region spans residues 408–533; the sequence is RLERVQVSCG…REHPPVVASL (126 aa).

This sequence belongs to the alpha-IPM synthase/homocitrate synthase family. LeuA type 1 subfamily. Homodimer. Mn(2+) serves as cofactor.

It localises to the cytoplasm. The enzyme catalyses 3-methyl-2-oxobutanoate + acetyl-CoA + H2O = (2S)-2-isopropylmalate + CoA + H(+). It functions in the pathway amino-acid biosynthesis; L-leucine biosynthesis; L-leucine from 3-methyl-2-oxobutanoate: step 1/4. Its function is as follows. Catalyzes the condensation of the acetyl group of acetyl-CoA with 3-methyl-2-oxobutanoate (2-ketoisovalerate) to form 3-carboxy-3-hydroxy-4-methylpentanoate (2-isopropylmalate). The polypeptide is 2-isopropylmalate synthase (Synechocystis sp. (strain ATCC 27184 / PCC 6803 / Kazusa)).